The chain runs to 453 residues: Protein IVY1 (453 aa).

Polar residues predominate over residues 1 to 16 (MPDNNTEQLQGSPSSD). The segment at 1–20 (MPDNNTEQLQGSPSSDQRLR) is disordered. A phosphoserine mark is found at S59, S84, and S85. 2 coiled-coil regions span residues 102–122 (KRDVKETQEALSTLLRNSNAY) and 230–257 (IRNLISYRESLSSLQARLDQLETLKHDF). 2 disordered regions span residues 316–340 (DGPYGTIGGDGETAGEAYNSDEETG) and 353–453 (TSQP…SSNI). S335 is modified (phosphoserine). Positions 353-371 (TSQPSTSKTSLPKSKGSST) are enriched in low complexity. 2 stretches are compositionally biased toward polar residues: residues 372–384 (VSTPNHSQSSSNK) and 404–429 (LMGTENSFSLPPTRNSAEETTQTFKQ). Positions 431 to 442 (SIKEDNDNHSSD) are enriched in basic and acidic residues. The span at 443 to 453 (TDGMQDQSSNI) shows a compositional bias: polar residues.

In terms of assembly, homomultimer. Interacts with YPT7 and VPS33.

Its subcellular location is the vacuole membrane. Its function is as follows. May be required for vacuolar fusion. Overexpression leads to fragmentation of vacuoles, missorting of the vacuolar enzyme carboxypeptidase Y (CPY) to the exterior of the cell and accumulation of multivesicular bodies inside the cell. In Saccharomyces cerevisiae (strain ATCC 204508 / S288c) (Baker's yeast), this protein is Protein IVY1 (IVY1).